A 502-amino-acid chain; its full sequence is UDP-glucuronosyltransferase 2C1 (502 aa).

N-linked (GlcNAc...) asparagine glycosylation is found at Asn-177 and Asn-288. The chain crosses the membrane as a helical span at residues Val-466 to Ala-481.

It belongs to the UDP-glycosyltransferase family.

The protein resides in the microsome membrane. It is found in the endoplasmic reticulum membrane. The enzyme catalyses glucuronate acceptor + UDP-alpha-D-glucuronate = acceptor beta-D-glucuronoside + UDP + H(+). Functionally, UDPGT is of major importance in the conjugation and subsequent elimination of potentially toxic xenobiotics and endogenous compounds. The sequence is that of UDP-glucuronosyltransferase 2C1 (UGT2C1) from Oryctolagus cuniculus (Rabbit).